We begin with the raw amino-acid sequence, 131 residues long: Small ribosomal subunit protein uS8 (131 aa).

The protein belongs to the universal ribosomal protein uS8 family. As to quaternary structure, part of the 30S ribosomal subunit. Contacts proteins S5 and S12.

One of the primary rRNA binding proteins, it binds directly to 16S rRNA central domain where it helps coordinate assembly of the platform of the 30S subunit. This is Small ribosomal subunit protein uS8 from Ruthia magnifica subsp. Calyptogena magnifica.